Consider the following 476-residue polypeptide: Cysteine--tRNA ligase (476 aa).

Cys-30 provides a ligand contact to Zn(2+). A 'HIGH' region motif is present at residues Pro-32 to Asn-42. Zn(2+) is bound by residues Cys-215, His-240, and Glu-244. The 'KMSKS' region signature appears at Lys-274–Ser-278. Lys-277 serves as a coordination point for ATP.

This sequence belongs to the class-I aminoacyl-tRNA synthetase family. Monomer. Requires Zn(2+) as cofactor.

Its subcellular location is the cytoplasm. It catalyses the reaction tRNA(Cys) + L-cysteine + ATP = L-cysteinyl-tRNA(Cys) + AMP + diphosphate. This is Cysteine--tRNA ligase from Lactobacillus helveticus (strain DPC 4571).